Here is a 228-residue protein sequence, read N- to C-terminus: Translin (228 aa).

Positions 86 to 90 are DNA/RNA binding; sequence RFHEH. The leucine-zipper stretch occupies residues 177–198; the sequence is LDSGFRLLNLKNDSLRKRYDGL. Lysine 187 is subject to N6-acetyllysine. A Phosphoserine modification is found at serine 190. Lysine 199 carries the post-translational modification N6-acetyllysine.

The protein belongs to the translin family. In terms of assembly, ring-shaped heterooctamer of six TSN and two TSNAX subunits, DNA/RNA binding occurs inside the ring.

It is found in the cytoplasm. It localises to the nucleus. Its function is as follows. DNA-binding protein that specifically recognizes consensus sequences at the breakpoint junctions in chromosomal translocations, mostly involving immunoglobulin (Ig)/T-cell receptor gene segments. Seems to recognize single-stranded DNA ends generated by staggered breaks occurring at recombination hot spots. Functionally, exhibits both single-stranded and double-stranded endoribonuclease activity. May act as an activator of RNA-induced silencing complex (RISC) by facilitating endonucleolytic cleavage of the siRNA passenger strand. The polypeptide is Translin (TSN) (Bos taurus (Bovine)).